Reading from the N-terminus, the 117-residue chain is Holo-[acyl-carrier-protein] synthase (117 aa).

Mg(2+)-binding residues include Asp-8 and Glu-58.

Belongs to the P-Pant transferase superfamily. AcpS family. Mg(2+) serves as cofactor.

The protein resides in the cytoplasm. It catalyses the reaction apo-[ACP] + CoA = holo-[ACP] + adenosine 3',5'-bisphosphate + H(+). In terms of biological role, transfers the 4'-phosphopantetheine moiety from coenzyme A to a Ser of acyl-carrier-protein. In Latilactobacillus sakei subsp. sakei (strain 23K) (Lactobacillus sakei subsp. sakei), this protein is Holo-[acyl-carrier-protein] synthase.